The following is a 632-amino-acid chain: Deoxynucleoside triphosphate triphosphohydrolase SAMHD1 (632 aa).

The segment at 1–22 (MKGINGAKRVRHDASPSAQDGY) is disordered. The SAM domain maps to 44 to 107 (WDVEEVCLFL…LSCLRMLCQN (64 aa)). Residues lysine 113 and valine 114 each contribute to the GTP site. Asparagine 116 provides a ligand contact to dGTP. GTP is bound by residues aspartate 134, glutamine 139, and arginine 142. Residues glutamine 146, leucine 147, valine 153, and arginine 161 each contribute to the dGTP site. Residue glutamine 146 coordinates dATP. Residue glutamine 146 coordinates dCTP. Glutamine 146 is a dTTP binding site. Arginine 161 provides a ligand contact to dATP. Arginine 161 contacts dCTP. Position 161 (arginine 161) interacts with dTTP. Residues 161–321 (RFEHSIGVGY…GIDVDKWDYF (161 aa)) form the HD domain. Histidine 164, histidine 203, and aspartate 204 together coordinate Mn(2+). 2 residues coordinate dATP: histidine 207 and histidine 212. Positions 207 and 212 each coordinate dCTP. Residues histidine 207 and histidine 212 each contribute to the dTTP site. Residue histidine 230 is part of the active site. Residue aspartate 316 coordinates Mn(2+). Residues lysine 317, tyrosine 320, aspartate 324, arginine 338, arginine 357, lysine 359, asparagine 363, arginine 371, tyrosine 379, glutamine 380, histidine 381, and lysine 382 each coordinate dGTP. Lysine 317, tyrosine 320, and aspartate 324 together coordinate dATP. Positions 317, 320, and 324 each coordinate dCTP. Positions 317, 320, and 324 each coordinate dTTP. DATP is bound at residue arginine 371. Residue arginine 371 coordinates dCTP. Position 380 (glutamine 380) interacts with dATP. Residue glutamine 380 participates in dCTP binding. Glutamine 380 contributes to the dTTP binding site. Residues arginine 456, lysine 460, and lysine 529 each coordinate GTP. Residue lysine 529 coordinates dGTP.

It belongs to the SAMHD1 family. In terms of assembly, homodimer; in absence of GTP and dNTP. Homotetramer; in GTP- and dNTP-bound form. Interacts with rbbp8/CtIP. Requires Zn(2+) as cofactor.

It localises to the nucleus. It is found in the chromosome. It catalyses the reaction a 2'-deoxyribonucleoside 5'-triphosphate + H2O = a 2'-deoxyribonucleoside + triphosphate + H(+). It carries out the reaction dATP + H2O = 2'-deoxyadenosine + triphosphate + H(+). The catalysed reaction is dCTP + H2O = 2'-deoxycytidine + triphosphate + H(+). The enzyme catalyses dGTP + H2O = 2'-deoxyguanosine + triphosphate + H(+). It catalyses the reaction dTTP + H2O = thymidine + triphosphate + H(+). Allosterically activated and regulated via the combined actions of GTP and dNTPs (dATP, dGTP, dTTP and dCTP): Allosteric site 1 binds GTP, while allosteric site 2 binds dNTP. Allosteric activation promotes the formation of highly active homotetramers. Its function is as follows. Protein that acts both as a host restriction factor involved in defense response to virus and as a regulator of DNA end resection at stalled replication forks. Has deoxynucleoside triphosphate (dNTPase) activity, which is required to restrict infection by viruses: dNTPase activity reduces cellular dNTP levels to levels too low for retroviral reverse transcription to occur, blocking early-stage virus replication in dendritic and other myeloid cells. Functions during S phase at stalled DNA replication forks to promote the resection of gapped or reversed forks: acts by stimulating the exonuclease activity of mre11, activating the ATR-CHK1 pathway and allowing the forks to restart replication. Ability to promote DNA end resection at stalled replication forks is independent of dNTPase activity. This Xenopus laevis (African clawed frog) protein is Deoxynucleoside triphosphate triphosphohydrolase SAMHD1.